The following is a 194-amino-acid chain: PRELI domain containing protein 3B (194 aa).

Residues 1-172 (MKIWTSEHVF…VIHKLNAEIE (172 aa)) form the PRELI/MSF1 domain. Residues serine 46 and serine 51 each carry the phosphoserine modification.

The protein belongs to the slowmo family.

This chain is PRELI domain containing protein 3B (PRELID3B), found in Macaca fascicularis (Crab-eating macaque).